Consider the following 639-residue polypeptide: Chaperone protein DnaK (639 aa).

Threonine 195 bears the Phosphothreonine; by autocatalysis mark. A compositionally biased stretch (low complexity) spans 601-618 (NAAAGAAPAGEPAPGEPQ). The interval 601-639 (NAAAGAAPAGEPAPGEPQAEQKKDDGVIDAEYVDVDEKK) is disordered. Residues 627-639 (VIDAEYVDVDEKK) show a composition bias toward acidic residues.

This sequence belongs to the heat shock protein 70 family.

Its function is as follows. Acts as a chaperone. This chain is Chaperone protein DnaK, found in Acidobacterium capsulatum (strain ATCC 51196 / DSM 11244 / BCRC 80197 / JCM 7670 / NBRC 15755 / NCIMB 13165 / 161).